The primary structure comprises 454 residues: tRNA modification GTPase MnmE (454 aa).

(6S)-5-formyl-5,6,7,8-tetrahydrofolate is bound by residues arginine 23, glutamate 80, and lysine 120. A TrmE-type G domain is found at 216 to 377; it reads GMKVVIAGRP…LRDHLKQSMG (162 aa). Asparagine 226 contributes to the K(+) binding site. GTP contacts are provided by residues 226–231, 245–251, 270–273, 335–338, and 358–360; these read NAGKSS, TDIAGTT, DTAG, NKAD, and SAR. Mg(2+) is bound at residue serine 230. K(+) contacts are provided by threonine 245, isoleucine 247, and threonine 250. Threonine 251 is a Mg(2+) binding site. Residue lysine 454 coordinates (6S)-5-formyl-5,6,7,8-tetrahydrofolate.

This sequence belongs to the TRAFAC class TrmE-Era-EngA-EngB-Septin-like GTPase superfamily. TrmE GTPase family. In terms of assembly, homodimer. Heterotetramer of two MnmE and two MnmG subunits. K(+) is required as a cofactor.

It localises to the cytoplasm. Its function is as follows. Exhibits a very high intrinsic GTPase hydrolysis rate. Involved in the addition of a carboxymethylaminomethyl (cmnm) group at the wobble position (U34) of certain tRNAs, forming tRNA-cmnm(5)s(2)U34. This chain is tRNA modification GTPase MnmE, found in Yersinia pseudotuberculosis serotype O:1b (strain IP 31758).